The sequence spans 64 residues: Large ribosomal subunit protein bL35 (64 aa).

2 stretches are compositionally biased toward basic residues: residues 1–15 and 23–43; these read MPKQ…KRFR and VRQK…RTRR. The disordered stretch occupies residues 1–64; that stretch reads MPKQKSHSGA…AGRIKRLLAR (64 aa).

It belongs to the bacterial ribosomal protein bL35 family.

This chain is Large ribosomal subunit protein bL35, found in Frankia alni (strain DSM 45986 / CECT 9034 / ACN14a).